The sequence spans 187 residues: Adenylate kinase (187 aa).

10-15 contacts ATP; sequence GSGKGT. The segment at 30 to 59 is NMP; that stretch reads STGDLLRSEVVAGTPLGLQAKQVMAQGDLV. AMP is bound by residues T31, R36, 57-59, 85-88, and Q92; these read DLV and GYPR. Positions 126 to 136 are LID; sequence GRAQAEGREDD. Residue R127 participates in ATP binding. AMP is bound by residues R133 and R144. G172 contacts ATP.

The protein belongs to the adenylate kinase family. In terms of assembly, monomer.

Its subcellular location is the cytoplasm. The enzyme catalyses AMP + ATP = 2 ADP. The protein operates within purine metabolism; AMP biosynthesis via salvage pathway; AMP from ADP: step 1/1. In terms of biological role, catalyzes the reversible transfer of the terminal phosphate group between ATP and AMP. Plays an important role in cellular energy homeostasis and in adenine nucleotide metabolism. This Xylella fastidiosa (strain M23) protein is Adenylate kinase.